A 277-amino-acid polypeptide reads, in one-letter code: Phosphoenolpyruvate synthase regulatory protein (277 aa).

157–164 (GVSRCGKT) is a binding site for ADP.

This sequence belongs to the pyruvate, phosphate/water dikinase regulatory protein family. PSRP subfamily.

It carries out the reaction [pyruvate, water dikinase] + ADP = [pyruvate, water dikinase]-phosphate + AMP + H(+). The enzyme catalyses [pyruvate, water dikinase]-phosphate + phosphate + H(+) = [pyruvate, water dikinase] + diphosphate. In terms of biological role, bifunctional serine/threonine kinase and phosphorylase involved in the regulation of the phosphoenolpyruvate synthase (PEPS) by catalyzing its phosphorylation/dephosphorylation. The sequence is that of Phosphoenolpyruvate synthase regulatory protein from Salmonella gallinarum (strain 287/91 / NCTC 13346).